Consider the following 44-residue polypeptide: Cytochrome b559 subunit beta (44 aa).

The helical transmembrane segment at 19–35 (WVSIHALAVPTIFFLGS) threads the bilayer. His-23 is a binding site for heme.

Belongs to the PsbE/PsbF family. As to quaternary structure, heterodimer of an alpha subunit and a beta subunit. PSII is composed of 1 copy each of membrane proteins PsbA, PsbB, PsbC, PsbD, PsbE, PsbF, PsbH, PsbI, PsbJ, PsbK, PsbL, PsbM, PsbT, PsbX, PsbY, PsbZ, Psb30/Ycf12, at least 3 peripheral proteins of the oxygen-evolving complex and a large number of cofactors. It forms dimeric complexes. Requires heme b as cofactor.

It localises to the plastid. The protein resides in the chloroplast thylakoid membrane. Functionally, this b-type cytochrome is tightly associated with the reaction center of photosystem II (PSII). PSII is a light-driven water:plastoquinone oxidoreductase that uses light energy to abstract electrons from H(2)O, generating O(2) and a proton gradient subsequently used for ATP formation. It consists of a core antenna complex that captures photons, and an electron transfer chain that converts photonic excitation into a charge separation. This chain is Cytochrome b559 subunit beta, found in Chlamydomonas moewusii (Chlamydomonas eugametos).